The sequence spans 123 residues: Ribonuclease P protein component (123 aa).

Belongs to the RnpA family. As to quaternary structure, consists of a catalytic RNA component (M1 or rnpB) and a protein subunit.

It catalyses the reaction Endonucleolytic cleavage of RNA, removing 5'-extranucleotides from tRNA precursor.. Its function is as follows. RNaseP catalyzes the removal of the 5'-leader sequence from pre-tRNA to produce the mature 5'-terminus. It can also cleave other RNA substrates such as 4.5S RNA. The protein component plays an auxiliary but essential role in vivo by binding to the 5'-leader sequence and broadening the substrate specificity of the ribozyme. This chain is Ribonuclease P protein component, found in Bordetella petrii (strain ATCC BAA-461 / DSM 12804 / CCUG 43448).